Reading from the N-terminus, the 292-residue chain is RNA 5'-monophosphate methyltransferase (292 aa).

The disordered stretch occupies residues 1–22 (MAASTEQATGGVEKTAAEEKPR). S-adenosyl-L-methionine contacts are provided by residues Arg46, Asn76, Asp110, 135–136 (DF), and Met164. The 222-residue stretch at 53-274 (ELLRRLFPQS…KQATETHPIP (222 aa)) folds into the Bin3-type SAM domain.

This sequence belongs to the methyltransferase superfamily. As to quaternary structure, interacts with DICER1; the interaction may be mediated by RNA.

It localises to the cytoplasm. It catalyses the reaction a 5'-end 5'-phospho-ribonucleoside-RNA + S-adenosyl-L-methionine = a 5'-end (5'-methylphospho)-ribonucleoside-RNA + S-adenosyl-L-homocysteine. It carries out the reaction a 5'-end 5'-phospho-ribonucleoside-RNA + 2 S-adenosyl-L-methionine = a 5'-end (5'-bismethylphospho)-ribonucleoside-RNA + 2 S-adenosyl-L-homocysteine. O-methyltransferase that specifically monomethylates 5'-monophosphate of cytoplasmic histidyl tRNA (tRNA(His)), acting as a capping enzyme by protecting tRNA(His) from cleavage by DICER1. Also able, with less efficiently, to methylate the 5' monophosphate of a subset of pre-miRNAs, acting as a negative regulator of miRNA processing. The 5' monophosphate of pre-miRNAs is recognized by DICER1 and is required for pre-miRNAs processing: methylation at this position reduces the processing of pre-miRNAs by DICER1. Was also reported to mediate dimethylation of pre-miR-145; however dimethylation cannot be reproduced by another group which observes a monomethylation of pre-miR-145. The polypeptide is RNA 5'-monophosphate methyltransferase (BCDIN3D) (Bos taurus (Bovine)).